A 485-amino-acid polypeptide reads, in one-letter code: Glutamate--tRNA ligase (485 aa).

The 'HIGH' region motif lies at 11-21; sequence PSPTGLLHIGN. Positions 255–259 match the 'KMSKS' region motif; the sequence is KLSKR. ATP is bound at residue Lys-258.

This sequence belongs to the class-I aminoacyl-tRNA synthetase family. Glutamate--tRNA ligase type 1 subfamily. Monomer.

It localises to the cytoplasm. The catalysed reaction is tRNA(Glu) + L-glutamate + ATP = L-glutamyl-tRNA(Glu) + AMP + diphosphate. Functionally, catalyzes the attachment of glutamate to tRNA(Glu) in a two-step reaction: glutamate is first activated by ATP to form Glu-AMP and then transferred to the acceptor end of tRNA(Glu). The protein is Glutamate--tRNA ligase of Streptococcus mutans serotype c (strain ATCC 700610 / UA159).